The sequence spans 291 residues: UPF0173 metal-dependent hydrolase Rmet_5695 (291 aa).

This sequence belongs to the UPF0173 family.

The polypeptide is UPF0173 metal-dependent hydrolase Rmet_5695 (Cupriavidus metallidurans (strain ATCC 43123 / DSM 2839 / NBRC 102507 / CH34) (Ralstonia metallidurans)).